Here is a 224-residue protein sequence, read N- to C-terminus: Probable GTP-binding protein EngB (224 aa).

Positions 31–204 constitute an EngB-type G domain; sequence VGVEIAFAGR…LGILDQWCKP (174 aa). GTP contacts are provided by residues 39–46, 65–69, 83–86, 150–153, and 183–185; these read GRSNAGKS, GRTQL, DLPG, TKAD, and FSS. Residues S46 and T67 each coordinate Mg(2+).

This sequence belongs to the TRAFAC class TrmE-Era-EngA-EngB-Septin-like GTPase superfamily. EngB GTPase family. It depends on Mg(2+) as a cofactor.

Functionally, necessary for normal cell division and for the maintenance of normal septation. This chain is Probable GTP-binding protein EngB, found in Shewanella piezotolerans (strain WP3 / JCM 13877).